Here is a 567-residue protein sequence, read N- to C-terminus: Vacuolar fusion protein MON1 homolog (567 aa).

Disordered regions lie at residues 1–52 (MDMD…DDEG) and 65–129 (TSAS…DDTS). The segment covering 7–19 (TNNPSPPGPPDSP) has biased composition (pro residues). Acidic residues predominate over residues 43–52 (DDYDDDDDEG).

It belongs to the MON1/SAND family. Interacts with CCZ1A, CCZ1B and RABF2B.

The protein localises to the endosome. It localises to the prevacuolar compartment. Plays an important role in membrane trafficking through the secretory apparatus. In complex with CCZ1, acts as a guanine exchange factor (GEF) for Rab7 protein family. Promotes the exchange of GDP to GTP, converting it from an inactive GDP-bound form into an active GTP-bound form. The active form is involved in protein trafficking from prevacuolar compartments (PVCs) to vacuoles. May serve as a linker between Rab5 and Rab7 protein families in PVCs and mediate PVC maturation. This Oryza sativa subsp. japonica (Rice) protein is Vacuolar fusion protein MON1 homolog.